We begin with the raw amino-acid sequence, 89 residues long: Small ribosomal subunit protein bS20 (89 aa).

Belongs to the bacterial ribosomal protein bS20 family.

In terms of biological role, binds directly to 16S ribosomal RNA. The polypeptide is Small ribosomal subunit protein bS20 (Phenylobacterium zucineum (strain HLK1)).